The following is a 258-amino-acid chain: Histidine/lysine/arginine/ornithine transport ATP-binding protein HisP (258 aa).

Residues Leu7–Leu253 enclose the ABC transporter domain. ATP contacts are provided by Ser41, Gly42, Gly44, Lys45, Ser46, and Thr47.

This sequence belongs to the ABC transporter superfamily. The HisPMQJ complex is composed of two ATP-binding proteins (HisP), two transmembrane proteins (HisM and HisQ) and a solute-binding protein (HisJ). The HisPMQ-ArgT complex is composed of two ATP-binding proteins (HisP), two transmembrane proteins (HisM and HisQ) and a solute-binding protein (ArgT).

The protein resides in the cell inner membrane. It catalyses the reaction a polar amino acid(out) + ATP + H2O = a polar amino acid(in) + ADP + phosphate + H(+). The enzyme catalyses L-histidine(out) + ATP + H2O = L-histidine(in) + ADP + phosphate + H(+). It carries out the reaction L-lysine(out) + ATP + H2O = L-lysine(in) + ADP + phosphate + H(+). The catalysed reaction is L-arginine(out) + ATP + H2O = L-arginine(in) + ADP + phosphate + H(+). It catalyses the reaction L-ornithine(out) + ATP + H2O = L-ornithine(in) + ADP + phosphate + H(+). Its activity is regulated as follows. Isolated, soluble HisP has a very low ATPase activity. ATPase activity is slightly increased in the presence of HisM and HisQ, and strongly increased when HisJ is also present. Its function is as follows. Part of the ABC transporter complex HisPMQJ involved in histidine transport. Is also part of the ABC transporter complex HisPMQ-ArgT involved in lysine/arginine/ornithine transport. Shows ATPase activity. Responsible for energy coupling to the transport system. The polypeptide is Histidine/lysine/arginine/ornithine transport ATP-binding protein HisP (Salmonella typhimurium (strain LT2 / SGSC1412 / ATCC 700720)).